Reading from the N-terminus, the 147-residue chain is Large ribosomal subunit protein bL9 (147 aa).

This sequence belongs to the bacterial ribosomal protein bL9 family.

Binds to the 23S rRNA. This Natranaerobius thermophilus (strain ATCC BAA-1301 / DSM 18059 / JW/NM-WN-LF) protein is Large ribosomal subunit protein bL9.